Consider the following 207-residue polypeptide: Cyclin-dependent kinase 2-interacting protein (207 aa).

Positions 78–99 (TDKVELDRLCSELLQTIENMEK) form a coiled coil.

Belongs to the CINP family. In terms of assembly, homodimer. Part of the 55LCC heterohexameric ATPase complex.

It is found in the nucleus. Component of the DNA replication complex, which interacts with two kinases, CDK2 and CDC7, thereby providing a functional and physical link between CDK2 and CDC7 during firing of the origins of replication. Regulates ATR-mediated checkpoint signaling in response to DNA damage. Part of the 55LCC heterohexameric ATPase complex which is chromatin-associated and promotes replisome proteostasis to maintain replication fork progression and genome stability. Required for replication fork progression, sister chromatid cohesion, and chromosome stability. The ATPase activity is specifically enhanced by replication fork DNA and is coupled to cysteine protease-dependent cleavage of replisome substrates in response to replication fork damage. Uses ATPase activity to process replisome substrates in S-phase, facilitating their proteolytic turnover from chromatin to ensure DNA replication and mitotic fidelity. As part of 55LCC complex, also involved in the cytoplasmic maturation steps of pre-60S ribosomal particles by promoting the release of shuttling protein RSL24D1/RLP24 from the pre-ribosomal particles. In Xenopus laevis (African clawed frog), this protein is Cyclin-dependent kinase 2-interacting protein (cinp).